The following is a 241-amino-acid chain: Phycocyanobilin:ferredoxin oxidoreductase (241 aa).

Belongs to the HY2 family.

It catalyses the reaction (2R,3Z)-phycocyanobilin + 4 oxidized [2Fe-2S]-[ferredoxin] = biliverdin IXalpha + 4 reduced [2Fe-2S]-[ferredoxin] + 4 H(+). Functionally, catalyzes the four-electron reduction of biliverdin IX-alpha (2-electron reduction at both the A and D rings); the reaction proceeds via an isolatable 2-electron intermediate, 181,182-dihydrobiliverdin. The chain is Phycocyanobilin:ferredoxin oxidoreductase from Prochlorococcus marinus (strain MIT 9215).